A 2572-amino-acid polypeptide reads, in one-letter code: Zinc finger homeobox protein 2 (2572 aa).

2 disordered regions span residues 1-107 and 343-425; these read MATL…GLPP and LSPP…ADDY. Positions 8–36 are enriched in low complexity; the sequence is STTGTTPSPGHNAPSLPSDTFSSSTPSDP. 2 stretches are compositionally biased toward polar residues: residues 44–53 and 389–398; these read ASSTSENMRS and LNQSSPTSKE. 2 consecutive C2H2-type zinc fingers follow at residues 453 to 476 and 508 to 532; these read LKCPKCNWHYKYQQTLDVHMREKH and YRCDVCNYSTTTKGNLSIHMQSDKH. Disordered regions lie at residues 537-566, 608-655, and 675-710; these read QGFQAGPGGQGSPPEASLPPSAGDKEPKTK, LPPG…LRPD, and RKFPTSAPGSLSPDAHLPPSQLLGSSSDSLPTSPPP. The span at 615 to 628 shows a compositional bias: pro residues; that stretch reads PGPPPPPGATPTSP. Residues 696–705 are compositionally biased toward low complexity; the sequence is LLGSSSDSLP. 2 consecutive C2H2-type zinc fingers follow at residues 821–845 and 870–894; these read LRCNICDFESNSKEKMQLHARGAAH and YHCLLCAWETPSRLAVLQHLRTPAH. The interval 929–974 is disordered; the sequence is QLRTPGKAPVTPLAEPPTPEKDAQNKTEQLASEETENKTGPSRDSA. The span at 954–974 shows a compositional bias: polar residues; the sequence is KTEQLASEETENKTGPSRDSA. The C2H2-type 5 zinc-finger motif lies at 1009-1032; sequence YRCPLCQEQLVGRPALHFHLSHLH. The disordered stretch occupies residues 1061–1171; the sequence is PTLSPLDNGQ…PAPADSRHPL (111 aa). Pro residues predominate over residues 1120-1132; it reads GQPPSPAPSPVPE. C2H2-type zinc fingers lie at residues 1191-1217 and 1248-1272; these read YKCTVCKESFTQKNILLVHYNSVSHLH and FKCTVCRVSYNQSSTLEIHMRSVLH. 3 disordered regions span residues 1269–1325, 1389–1408, and 1415–1434; these read SVLH…FLSP, LPAATPPPPPQPPKAELAER, and MAKEGNEAGPSSPPDPLPNE. The span at 1279–1311 shows a compositional bias: basic and acidic residues; sequence TKTDSKIEGPERSQEEPKEGETEGEVGTEKKGP. Residues 1392–1401 show a composition bias toward pro residues; that stretch reads ATPPPPPQPP. The segment at 1480 to 1503 adopts a C2H2-type 8 zinc-finger fold; the sequence is LACGACGKLFSNMLILKTHEEHVH. The segment at 1528-1591 is disordered; that stretch reads PPLAEPPKPP…SSRGNLPPLV (64 aa). Positions 1595-1654 form a DNA-binding region, homeobox 1; sequence RRFSRTKFTEFQTQALQSFFETSAYPKDGEVERLASLLGLASRVVVVWFQNARQKARKNA. The segment at 1670–1696 adopts a C2H2-type 9; degenerate zinc-finger fold; the sequence is SGCRRCHATFSCVFELVRHLKKCYDDQ. Over residues 1696–1724 the composition is skewed to acidic residues; the sequence is QTLEEEEEEAERGEEEEEVEEEEVEEEQG. Disordered stretches follow at residues 1696–1769, 1820–1860, 1912–2065, 2268–2327, and 2398–2431; these read QTLE…SPAH, AATS…DKRL, ERKG…GMGQ, VQTA…NDAL, and NALLQPPPQPPEPTATAPPKPPELPAPGEGEAGE. Residues 1728-1738 are compositionally biased toward pro residues; that stretch reads PAGPEGPLPEP. The C2H2-type 10 zinc finger occupies 1769 to 1791; it reads HTCDQCAISFSSQDLLTSHRRLH. The segment at residues 1857 to 1916 is a DNA-binding region (homeobox 2); it reads DKRLRTTILPEQLEILYRWYMQDSNPTRKMLDCISEEVGLKKRVVQVWFQNTRARERKGQ. The span at 1925 to 1939 shows a compositional bias: low complexity; sequence PSPAVKPPATATPAS. Residues 1949–1963 are compositionally biased toward basic and acidic residues; it reads KVDDGTGREAPKREA. Over residues 1991 to 2004 the composition is skewed to pro residues; sequence TPEPPLPLLPPPPP. Positions 2017-2044 are enriched in low complexity; sequence SPESEACSLSAGDLSDSSASSLAEPESP. Over residues 2045 to 2061 the composition is skewed to gly residues; it reads GAGGTSGGPGGGTGVPD. Residues 2065-2124 constitute a DNA-binding region (homeobox 3); the sequence is QRRYRTQMSSLQLKIMKACYEAYRTPTMQECEVLGEEIGLPKRVIQVWFQNARAKEKKAK. Over residues 2284–2293 the composition is skewed to polar residues; that stretch reads DQTNTSTAGT. A compositionally biased stretch (basic and acidic residues) spans 2305–2315; it reads LGDKVSSERKP. Positions 2402 to 2422 are enriched in pro residues; it reads QPPPQPPEPTATAPPKPPELP. Residues 2451–2471 form a C2H2-type 11; degenerate zinc finger; sequence YLCRQCKMAFDGEAPATAHQR. The C2H2-type 12 zinc-finger motif lies at 2495–2519; sequence YHCLACEVLLSGREALASHLRSSAH. The interval 2551-2572 is disordered; it reads EARLPHTDSNPKTTTTSTLLAL. A compositionally biased stretch (low complexity) spans 2563-2572; it reads TTTTSTLLAL.

The protein localises to the nucleus. Transcriptional regulator that is critical for the regulation of pain perception and processing of noxious stimuli. This chain is Zinc finger homeobox protein 2 (ZFHX2), found in Homo sapiens (Human).